Here is a 330-residue protein sequence, read N- to C-terminus: Beta-ketoacyl-[acyl-carrier-protein] synthase III (330 aa).

Residues cysteine 115 and histidine 255 contribute to the active site. Residues 256–260 form an ACP-binding region; it reads QANVR. Asparagine 285 is an active-site residue.

The protein belongs to the thiolase-like superfamily. FabH family. Homodimer.

Its subcellular location is the cytoplasm. It carries out the reaction malonyl-[ACP] + acetyl-CoA + H(+) = 3-oxobutanoyl-[ACP] + CO2 + CoA. The protein operates within lipid metabolism; fatty acid biosynthesis. In terms of biological role, catalyzes the condensation reaction of fatty acid synthesis by the addition to an acyl acceptor of two carbons from malonyl-ACP. Catalyzes the first condensation reaction which initiates fatty acid synthesis and may therefore play a role in governing the total rate of fatty acid production. Possesses both acetoacetyl-ACP synthase and acetyl transacylase activities. Its substrate specificity determines the biosynthesis of branched-chain and/or straight-chain of fatty acids. This is Beta-ketoacyl-[acyl-carrier-protein] synthase III from Symbiobacterium thermophilum (strain DSM 24528 / JCM 14929 / IAM 14863 / T).